Reading from the N-terminus, the 143-residue chain is Mediator of RNA polymerase II transcription subunit 10 (143 aa).

The interval 123–143 is disordered; that stretch reads GAHSNTEISTNPGQKRQGNVS. A compositionally biased stretch (polar residues) spans 124–143; sequence AHSNTEISTNPGQKRQGNVS.

Belongs to the Mediator complex subunit 10 family. Component of the Mediator complex.

It localises to the nucleus. Its function is as follows. Component of the Mediator complex, a coactivator involved in the regulated transcription of nearly all RNA polymerase II-dependent genes. Mediator functions as a bridge to convey information from gene-specific regulatory proteins to the basal RNA polymerase II transcription machinery. Mediator is recruited to promoters by direct interactions with regulatory proteins and serves as a scaffold for the assembly of a functional preinitiation complex with RNA polymerase II and the general transcription factors. This is Mediator of RNA polymerase II transcription subunit 10 (NUT2) from Yarrowia lipolytica (strain CLIB 122 / E 150) (Yeast).